Consider the following 67-residue polypeptide: Preprofallaxidin-1 (67 aa).

Positions 1–22 are cleaved as a signal peptide; sequence MASLKKSLFLVLFLGMVSLSIC. Positions 23 to 46 are excised as a propeptide; sequence DKEKREGENEEEEEEHEEESEEKR. The segment at 24–46 is disordered; the sequence is KEKREGENEEEEEEHEEESEEKR. The span at 30 to 42 shows a compositional bias: acidic residues; that stretch reads ENEEEEEEHEEES.

Expressed by the skin glands.

The protein localises to the secreted. Fallaxidin-4.1 shows antibacterial activity against the Gram-positive bacteria L.lactis (MIC=12 uM), M.luteus (MIC=100 uM), S.epidermidis (MIC=100 uM) and S.uberis (MIC=50 uM). No antibacterial activity against the Gram-positive bacteria B.cereus, E.faecalis, L.innocua, S.aureus, or the Gram-negative bacteria E.cloacae and E.coli. Inhibits the formation of NO by neuronal nitric oxide synthase with an IC(50) of 13.3 uM. This Litoria fallax (Eastern dwarf tree frog) protein is Preprofallaxidin-1.